Reading from the N-terminus, the 262-residue chain is Small ribosomal subunit protein uS3 (262 aa).

In terms of domain architecture, KH type-2 spans 39-107 (VREFLKKKLK…PVHVNIEEIR (69 aa)). The segment at 211–262 (NDAPVVEEPQEERRKRPGRPEGRRREGEGRPAGQRRGAGAGARRGTDAKTGE) is disordered. Residues 221-239 (EERRKRPGRPEGRRREGEG) show a composition bias toward basic and acidic residues.

It belongs to the universal ribosomal protein uS3 family. Part of the 30S ribosomal subunit. Forms a tight complex with proteins S10 and S14.

In terms of biological role, binds the lower part of the 30S subunit head. Binds mRNA in the 70S ribosome, positioning it for translation. This Ralstonia pickettii (strain 12J) protein is Small ribosomal subunit protein uS3.